The following is a 262-amino-acid chain: Sperm microtubule inner protein 6 (262 aa).

This sequence belongs to the SPMIP6 family. Microtubule inner protein component of sperm flagellar doublet microtubules. Interacts with alpha-tubulin. Expressed in testis. Strongly expressed in ciliated epithelial cells with lower levels in goblet cells (at protein level).

It localises to the cytoplasm. The protein localises to the cytoskeleton. The protein resides in the nucleus. Its subcellular location is the mitochondrion. It is found in the flagellum axoneme. In terms of biological role, may participate in intramanchette transport and midpiece formation of the sperm tail. May play a potential role in somatic cell proliferation. The polypeptide is Sperm microtubule inner protein 6 (Homo sapiens (Human)).